An 89-amino-acid polypeptide reads, in one-letter code: Small ribosomal subunit protein uS14A (89 aa).

Belongs to the universal ribosomal protein uS14 family. In terms of assembly, part of the 30S ribosomal subunit. Contacts proteins S3 and S10.

Binds 16S rRNA, required for the assembly of 30S particles and may also be responsible for determining the conformation of the 16S rRNA at the A site. In Pediococcus pentosaceus (strain ATCC 25745 / CCUG 21536 / LMG 10740 / 183-1w), this protein is Small ribosomal subunit protein uS14A.